We begin with the raw amino-acid sequence, 430 residues long: Probable ribosomal RNA small subunit methyltransferase B (430 aa).

S-adenosyl-L-methionine-binding positions include C246–K252, D270, D299, and D318. Catalysis depends on C371, which acts as the Nucleophile.

Belongs to the class I-like SAM-binding methyltransferase superfamily. RsmB/NOP family.

It is found in the cytoplasm. The catalysed reaction is cytidine(967) in 16S rRNA + S-adenosyl-L-methionine = 5-methylcytidine(967) in 16S rRNA + S-adenosyl-L-homocysteine + H(+). Specifically methylates the cytosine at position 967 (m5C967) of 16S rRNA. This is Probable ribosomal RNA small subunit methyltransferase B from Coxiella burnetii (strain RSA 493 / Nine Mile phase I).